Here is a 136-residue protein sequence, read N- to C-terminus: MKEIATEYSFIKYTELELDDNGSIKQLSIPNKYNVIYAIAINDELVYIGKTKNLRKRINYYRTAINRKDKTSDSTKSALIHSALKEGSKVEFYARQCFNLSMTNELGTMTIATIDLEEPLFIKLFNPPWNIQHKKK.

The region spanning 32–131 (KYNVIYAIAI…IKLFNPPWNI (100 aa)) is the GIY-YIG domain.

In terms of assembly, homotetramer. Mg(2+) is required as a cofactor.

It catalyses the reaction Endonucleolytic nicking and cleavage of cytosine-containing double-stranded DNA.. Functionally, contributes to the degradation of host DNA, permitting the scavenging of host-derived nucleotides for phage DNA synthesis. Sequence-specific endonuclease. Catalyzes nicking of the bottom strand of double-stranded DNA between the first and second base pair to the right of a top-strand CCGC motif. Does not cleave native phage DNA, which contains 5-hydroxymethylcytosine instead of cytosine. In Escherichia coli (Bacteriophage T4), this protein is Endonuclease II (denA).